A 352-amino-acid chain; its full sequence is Lipopolysaccharide core biosynthesis mannosyltransferase LpcC (352 aa).

It belongs to the glycosyltransferase group 1 family. Glycosyltransferase 4 subfamily.

Its pathway is bacterial outer membrane biogenesis; LPS core biosynthesis. Functionally, acts at transfer of mannose group to a 3-deoxy-D-mono octulonic acid (KDO) via an alpha-1,5 linkage. This is Lipopolysaccharide core biosynthesis mannosyltransferase LpcC (lpcC) from Rhizobium leguminosarum bv. viciae.